The chain runs to 307 residues: Pseudouridine-5'-phosphate glycosidase (307 aa).

Glu28 serves as the catalytic Proton donor. Lys89 and Val109 together coordinate substrate. Asp141 serves as a coordination point for Mn(2+). Ser143–Asp145 provides a ligand contact to substrate. Catalysis depends on Lys162, which acts as the Nucleophile.

This sequence belongs to the pseudouridine-5'-phosphate glycosidase family. As to quaternary structure, homotrimer. Mn(2+) is required as a cofactor.

It carries out the reaction D-ribose 5-phosphate + uracil = psi-UMP + H2O. In terms of biological role, catalyzes the reversible cleavage of pseudouridine 5'-phosphate (PsiMP) to ribose 5-phosphate and uracil. Functions biologically in the cleavage direction, as part of a pseudouridine degradation pathway. The polypeptide is Pseudouridine-5'-phosphate glycosidase (Nocardioides sp. (strain ATCC BAA-499 / JS614)).